We begin with the raw amino-acid sequence, 315 residues long: Bifunctional protein FolD (315 aa).

NADP(+)-binding positions include 166–168, serine 193, and isoleucine 234; that span reads GRS.

Belongs to the tetrahydrofolate dehydrogenase/cyclohydrolase family. Homodimer.

It catalyses the reaction (6R)-5,10-methylene-5,6,7,8-tetrahydrofolate + NADP(+) = (6R)-5,10-methenyltetrahydrofolate + NADPH. The enzyme catalyses (6R)-5,10-methenyltetrahydrofolate + H2O = (6R)-10-formyltetrahydrofolate + H(+). Its pathway is one-carbon metabolism; tetrahydrofolate interconversion. Functionally, catalyzes the oxidation of 5,10-methylenetetrahydrofolate to 5,10-methenyltetrahydrofolate and then the hydrolysis of 5,10-methenyltetrahydrofolate to 10-formyltetrahydrofolate. This is Bifunctional protein FolD from Treponema pallidum (strain Nichols).